The chain runs to 382 residues: tRNA-specific 2-thiouridylase MnmA (382 aa).

ATP contacts are provided by residues 34–41 (AMSGGVDS) and L60. Catalysis depends on C128, which acts as the Nucleophile. Residues C128 and C224 are joined by a disulfide bond. Residue G152 participates in ATP binding. The interaction with tRNA stretch occupies residues 174 to 176 (RDQ). C224 (cysteine persulfide intermediate) is an active-site residue.

It belongs to the MnmA/TRMU family.

It is found in the cytoplasm. The catalysed reaction is S-sulfanyl-L-cysteinyl-[protein] + uridine(34) in tRNA + AH2 + ATP = 2-thiouridine(34) in tRNA + L-cysteinyl-[protein] + A + AMP + diphosphate + H(+). In terms of biological role, catalyzes the 2-thiolation of uridine at the wobble position (U34) of tRNA, leading to the formation of s(2)U34. This chain is tRNA-specific 2-thiouridylase MnmA, found in Sphingopyxis alaskensis (strain DSM 13593 / LMG 18877 / RB2256) (Sphingomonas alaskensis).